The sequence spans 339 residues: Phenylalanine--tRNA ligase alpha subunit (339 aa).

Glu-254 contacts Mg(2+).

The protein belongs to the class-II aminoacyl-tRNA synthetase family. Phe-tRNA synthetase alpha subunit type 1 subfamily. Tetramer of two alpha and two beta subunits. Requires Mg(2+) as cofactor.

The protein resides in the cytoplasm. It carries out the reaction tRNA(Phe) + L-phenylalanine + ATP = L-phenylalanyl-tRNA(Phe) + AMP + diphosphate + H(+). The chain is Phenylalanine--tRNA ligase alpha subunit from Clostridium novyi (strain NT).